Here is a 406-residue protein sequence, read N- to C-terminus: Peptidase T (406 aa).

Residue histidine 82 participates in Zn(2+) binding. The active site involves aspartate 84. Aspartate 142 contributes to the Zn(2+) binding site. Catalysis depends on glutamate 176, which acts as the Proton acceptor. Positions 177, 199, and 381 each coordinate Zn(2+).

Belongs to the peptidase M20B family. It depends on Zn(2+) as a cofactor.

It is found in the cytoplasm. The enzyme catalyses Release of the N-terminal residue from a tripeptide.. In terms of biological role, cleaves the N-terminal amino acid of tripeptides. This chain is Peptidase T, found in Streptococcus agalactiae serotype V (strain ATCC BAA-611 / 2603 V/R).